The chain runs to 367 residues: DNA replication and repair protein RecF (367 aa).

Residue 30–37 participates in ATP binding; it reads GNNGEGKT.

It belongs to the RecF family.

Its subcellular location is the cytoplasm. Functionally, the RecF protein is involved in DNA metabolism; it is required for DNA replication and normal SOS inducibility. RecF binds preferentially to single-stranded, linear DNA. It also seems to bind ATP. The chain is DNA replication and repair protein RecF from Leptospira biflexa serovar Patoc (strain Patoc 1 / Ames).